The following is a 136-amino-acid chain: Small ribosomal subunit protein uS8 (136 aa).

This sequence belongs to the universal ribosomal protein uS8 family. Part of the 30S ribosomal subunit. Contacts proteins S5 and S12.

Its function is as follows. One of the primary rRNA binding proteins, it binds directly to 16S rRNA central domain where it helps coordinate assembly of the platform of the 30S subunit. The protein is Small ribosomal subunit protein uS8 of Synechococcus sp. (strain JA-2-3B'a(2-13)) (Cyanobacteria bacterium Yellowstone B-Prime).